A 203-amino-acid polypeptide reads, in one-letter code: Outer-membrane lipoprotein carrier protein (203 aa).

The first 21 residues, 1–21 (MKKQLMTSCLFAAVLAAPAFA), serve as a signal peptide directing secretion.

The protein belongs to the LolA family. Monomer.

The protein localises to the periplasm. In terms of biological role, participates in the translocation of lipoproteins from the inner membrane to the outer membrane. Only forms a complex with a lipoprotein if the residue after the N-terminal Cys is not an aspartate (The Asp acts as a targeting signal to indicate that the lipoprotein should stay in the inner membrane). The protein is Outer-membrane lipoprotein carrier protein of Sodalis glossinidius (strain morsitans).